Reading from the N-terminus, the 1188-residue chain is AT-rich interactive domain-containing protein 5B (1188 aa).

Residue lysine 130 forms a Glycyl lysine isopeptide (Lys-Gly) (interchain with G-Cter in SUMO2) linkage. Residues 251–277 (RPRKKKPCPQRRDSFSGVKDSNNNSDG) are disordered. Residue serine 264 is modified to Phosphoserine. Residues 318 to 410 (RADEQAFLVA…LILPYERFIK (93 aa)) enclose the ARID domain. Lysine 336 carries the N6,N6-dimethyllysine modification. The interval 412–611 (EEDKPLPPIK…QPPLANQNET (200 aa)) is disordered. Residue lysine 445 forms a Glycyl lysine isopeptide (Lys-Gly) (interchain with G-Cter in SUMO2) linkage. Over residues 446 to 458 (HEIPKSKKEKENA) the composition is skewed to basic and acidic residues. Glycyl lysine isopeptide (Lys-Gly) (interchain with G-Cter in SUMO2) cross-links involve residues lysine 494 and lysine 496. The span at 597 to 609 (SFPTTQPPLANQN) shows a compositional bias: polar residues. Glycyl lysine isopeptide (Lys-Gly) (interchain with G-Cter in SUMO2) cross-links involve residues lysine 767, lysine 774, lysine 803, and lysine 810. 2 disordered regions span residues 846–874 (HHLH…PSHR) and 891–918 (DKKS…HKPT). A compositionally biased stretch (basic and acidic residues) spans 847 to 866 (HLHNEQTSKYPSRDMYRESE). Glycyl lysine isopeptide (Lys-Gly) (interchain with G-Cter in SUMO2) cross-links involve residues lysine 893, lysine 916, lysine 920, and lysine 935. Positions 956 to 978 (RVSPMTMSGPKKYPESLSRSGKP) are disordered. Glycyl lysine isopeptide (Lys-Gly) (interchain with G-Cter in SUMO2) cross-links involve residues lysine 988, lysine 1000, and lysine 1013. The disordered stretch occupies residues 1028-1070 (ARAVSPLDPSKEVSGKEKASEQESEGSKAAHGGHSGGGSEGHK). The residue at position 1032 (serine 1032) is a Phosphoserine. The segment covering 1036–1055 (PSKEVSGKEKASEQESEGSK) has biased composition (basic and acidic residues). Residues lysine 1055 and lysine 1070 each participate in a glycyl lysine isopeptide (Lys-Gly) (interchain with G-Cter in SUMO2) cross-link. Position 1133 is a phosphoserine (serine 1133).

Belongs to the ARID5B family. Post-translationally, methylation at Lys-336 prevents DNA-binding. Demethylation by PHF2 promotes recruitment of the PHF2-ARID5B complex to promoters. As to expression, widely expressed, including in liver (at protein level).

The protein resides in the nucleus. In terms of biological role, transcription coactivator that binds to the 5'-AATA[CT]-3' core sequence and plays a key role in adipogenesis and liver development. Acts by forming a complex with phosphorylated PHF2, which mediates demethylation at Lys-336, leading to target the PHF2-ARID5B complex to target promoters, where PHF2 mediates demethylation of dimethylated 'Lys-9' of histone H3 (H3K9me2), followed by transcription activation of target genes. The PHF2-ARID5B complex acts as a coactivator of HNF4A in liver. Required for adipogenesis: regulates triglyceride metabolism in adipocytes by regulating expression of adipogenic genes. Overexpression leads to induction of smooth muscle marker genes, suggesting that it may also act as a regulator of smooth muscle cell differentiation and proliferation. Represses the cytomegalovirus enhancer. This is AT-rich interactive domain-containing protein 5B (ARID5B) from Homo sapiens (Human).